The sequence spans 291 residues: ATP synthase gamma chain (291 aa).

It belongs to the ATPase gamma chain family. In terms of assembly, F-type ATPases have 2 components, CF(1) - the catalytic core - and CF(0) - the membrane proton channel. CF(1) has five subunits: alpha(3), beta(3), gamma(1), delta(1), epsilon(1). CF(0) has three main subunits: a, b and c.

It is found in the cell inner membrane. Its function is as follows. Produces ATP from ADP in the presence of a proton gradient across the membrane. The gamma chain is believed to be important in regulating ATPase activity and the flow of protons through the CF(0) complex. The protein is ATP synthase gamma chain of Neisseria meningitidis serogroup C (strain 053442).